The primary structure comprises 24 residues: Brevinin-1Bd (24 aa).

Cysteine 18 and cysteine 24 are disulfide-bonded.

As to expression, expressed by the skin glands.

The protein localises to the secreted. In terms of biological role, antibacterial activity against Gram-positive bacterium S.aureus and Gram-negative bacterium E.coli. Has activity against C.albicans. The sequence is that of Brevinin-1Bd from Lithobates berlandieri (Rio Grande leopard frog).